Consider the following 208-residue polypeptide: Large ribosomal subunit protein uL4 (208 aa).

A disordered region spans residues 42–77 (SMRQGTHKTKTKTEVSGGGRKPWRQKGTGRARQGSI).

It belongs to the universal ribosomal protein uL4 family. Part of the 50S ribosomal subunit.

One of the primary rRNA binding proteins, this protein initially binds near the 5'-end of the 23S rRNA. It is important during the early stages of 50S assembly. It makes multiple contacts with different domains of the 23S rRNA in the assembled 50S subunit and ribosome. Its function is as follows. Forms part of the polypeptide exit tunnel. The protein is Large ribosomal subunit protein uL4 of Spiroplasma kunkelii.